A 334-amino-acid polypeptide reads, in one-letter code: Fructose-1,6-bisphosphatase class 1 (334 aa).

Residues Glu91, Asp113, Leu115, and Asp116 each contribute to the Mg(2+) site. Substrate contacts are provided by residues 116-119 (DGSS), Asn208, and Lys274. Glu280 lines the Mg(2+) pocket.

It belongs to the FBPase class 1 family. In terms of assembly, homotetramer. The cofactor is Mg(2+).

The protein localises to the cytoplasm. It catalyses the reaction beta-D-fructose 1,6-bisphosphate + H2O = beta-D-fructose 6-phosphate + phosphate. It functions in the pathway carbohydrate biosynthesis; gluconeogenesis. This Herminiimonas arsenicoxydans protein is Fructose-1,6-bisphosphatase class 1.